The sequence spans 246 residues: MLLIPAIDLKDGHCVRLKQGDMDQSTIFSEDPAAMARNWVDKGARRLHLVDLNGAFAGKPKNEAAIKRILAEVGSEIDVQLGGGIRDLDTIERYLDAGLRYVIIGTAAVKNPGFLQDACTAFGGHIIVGLDAKDGRVATDGWSKLTGHEVVDLAKKFQDYGVESIIYTDIGRDGMLSGINIQATVKLAQALTIPVIASGGLSNMADIDALCAVEDEGVQGVICGRSIYSGDLDFEAAQERADELNG.

The active-site Proton acceptor is Asp8. Asp131 functions as the Proton donor in the catalytic mechanism.

It belongs to the HisA/HisF family.

Its subcellular location is the cytoplasm. The enzyme catalyses 1-(5-phospho-beta-D-ribosyl)-5-[(5-phospho-beta-D-ribosylamino)methylideneamino]imidazole-4-carboxamide = 5-[(5-phospho-1-deoxy-D-ribulos-1-ylimino)methylamino]-1-(5-phospho-beta-D-ribosyl)imidazole-4-carboxamide. Its pathway is amino-acid biosynthesis; L-histidine biosynthesis; L-histidine from 5-phospho-alpha-D-ribose 1-diphosphate: step 4/9. The protein is 1-(5-phosphoribosyl)-5-[(5-phosphoribosylamino)methylideneamino] imidazole-4-carboxamide isomerase of Polaromonas naphthalenivorans (strain CJ2).